The primary structure comprises 547 residues: MAAKDVKFAGDARDRMLRGVDILANAVKVTLGPKGRNVVIEKSFGAPRITKDGVTVAKEIELEDKFENMGAQMLREVASKTNDLAGDGTTTATVLAQAIVREGAKAVAAGMNPMDLKRGIDTAVAAVIKDIEKRAKPVASSAEVAQVGTISANGDAAIGKMIAQAMQKVGNEGVITVEENKSLETEVDIVEGMKFDRGYLSPYFVTNAEKMTAELDDVYVLLHEKKLSGLQAMLPVLEAVVQSGRPLLIIAEDVEGEALATLVVNRLRGGLKVAAVKAPGFGDRRKAMLEDIAILTGGQLISDDLGMKLENVTIKMLGRAKKVVIDKENTTIVNGAGKKADIEARVGQIKAQIEETTSDYDREKLQERLAKLAGGVAVIRVGGATEIEVKEKKDRVEDALNATRAAVQEGIVPGGGVALLRAKKAVGRITNPNSDVQAGINIVLKALEAPVRQIAENAGVEGSLVVGKILEEKSETFGFDAQSEDYVDMVAKGIIDPAKVVRTALQDASSVAGLLVTTEAMVAELPKEAAPAMPAGGGMGGMGGMGF.

Residues 30-33 (TLGP), Lys-51, 87-91 (DGTTT), Gly-415, and Asp-496 each bind ATP.

Belongs to the chaperonin (HSP60) family. As to quaternary structure, forms a cylinder of 14 subunits composed of two heptameric rings stacked back-to-back. Interacts with the co-chaperonin GroES.

Its subcellular location is the cytoplasm. The catalysed reaction is ATP + H2O + a folded polypeptide = ADP + phosphate + an unfolded polypeptide.. Its function is as follows. Together with its co-chaperonin GroES, plays an essential role in assisting protein folding. The GroEL-GroES system forms a nano-cage that allows encapsulation of the non-native substrate proteins and provides a physical environment optimized to promote and accelerate protein folding. The sequence is that of Chaperonin GroEL 1 from Bradyrhizobium sp. (strain BTAi1 / ATCC BAA-1182).